The primary structure comprises 134 residues: Acyl carrier protein, mitochondrial (134 aa).

The N-terminal 46 residues, 1 to 46, are a transit peptide targeting the mitochondrion; sequence MFRTAALTAARVARPAVASAVRAGVARPAFVQAVPKVAAFQAVRFY. In terms of domain architecture, Carrier spans 55-131; that stretch reads DEVFSRIAQV…KAVEYILSQP (77 aa). Ser91 carries the post-translational modification O-(pantetheine 4'-phosphoryl)serine.

This sequence belongs to the acyl carrier protein (ACP) family. Complex I is composed of about 30 different subunits. Post-translationally, 4'-phosphopantetheine is transferred from CoA to a specific serine of apo-ACP by acpS. This modification is essential for activity because fatty acids are bound in thioester linkage to the sulfhydryl of the prosthetic group.

Its subcellular location is the mitochondrion. It participates in lipid metabolism; fatty acid biosynthesis. Its function is as follows. Carrier of the growing fatty acid chain in fatty acid biosynthesis. May be involved in the synthesis of very-long-chain fatty acids. Accessory and non-catalytic subunit of the mitochondrial membrane respiratory chain NADH dehydrogenase (Complex I), which functions in the transfer of electrons from NADH to the respiratory chain. This chain is Acyl carrier protein, mitochondrial (nuo-12), found in Neurospora crassa (strain ATCC 24698 / 74-OR23-1A / CBS 708.71 / DSM 1257 / FGSC 987).